Consider the following 152-residue polypeptide: Nucleoside diphosphate kinase B (152 aa).

Residues 1–66 (MAHQERTFIA…DRPFYPGLVK (66 aa)) form an interaction with AKAP13 region. 6 residues coordinate ATP: K12, F60, R88, T94, R105, and N115. Catalysis depends on H118, which acts as the Pros-phosphohistidine intermediate.

The protein belongs to the NDK family. In terms of assembly, hexamer of two different chains: An and B (A6, A5B, A4B2, A3B3, A2B4, AB5, B6). Interacts with CAPN8. Interacts with AKAP13. Interacts with ITGB1BP1 (via C-terminal domain region). Interacts with BCL2L10. The cofactor is Mg(2+). Ubiquitous.

The protein resides in the cytoplasm. The protein localises to the cell projection. It is found in the lamellipodium. Its subcellular location is the ruffle. It localises to the nucleus. The enzyme catalyses a 2'-deoxyribonucleoside 5'-diphosphate + ATP = a 2'-deoxyribonucleoside 5'-triphosphate + ADP. The catalysed reaction is a ribonucleoside 5'-diphosphate + ATP = a ribonucleoside 5'-triphosphate + ADP. It carries out the reaction ATP + protein L-histidine = ADP + protein N-phospho-L-histidine.. In terms of biological role, major role in the synthesis of nucleoside triphosphates other than ATP. The ATP gamma phosphate is transferred to the NDP beta phosphate via a ping-pong mechanism, using a phosphorylated active-site intermediate. Negatively regulates Rho activity by interacting with AKAP13/LBC. Acts as a transcriptional activator of the MYC gene; binds DNA non-specifically. Binds to both single-stranded guanine- and cytosine-rich strands within the nuclease hypersensitive element (NHE) III(1) region of the MYC gene promoter. Does not bind to duplex NHE III(1). Has G-quadruplex (G4) DNA-binding activity, which is independent of its nucleotide-binding and kinase activity. Binds both folded and unfolded G4 with similar low nanomolar affinities. Stabilizes folded G4s regardless of whether they are prefolded or not. Exhibits histidine protein kinase activity. This is Nucleoside diphosphate kinase B (NME2) from Canis lupus familiaris (Dog).